The chain runs to 59 residues: Antitoxin Rv0909 (59 aa).

In terms of biological role, antitoxin component of a type II toxin-antitoxin (TA) system. Upon expression in M.smegmatis neutralizes the effect of cognate toxin Rv0910. The polypeptide is Antitoxin Rv0909 (Mycobacterium tuberculosis (strain ATCC 25618 / H37Rv)).